Consider the following 367-residue polypeptide: tRNA-specific 2-thiouridylase MnmA (367 aa).

ATP contacts are provided by residues 9–16 (GLSGGVDS) and M35. An interaction with target base in tRNA region spans residues 95–97 (NPD). The active-site Nucleophile is C100. A disulfide bridge links C100 with C196. ATP is bound at residue G124. The tract at residues 146 to 148 (KDQ) is interaction with tRNA. The Cysteine persulfide intermediate role is filled by C196. An interaction with tRNA region spans residues 308-309 (RY).

It belongs to the MnmA/TRMU family.

The protein resides in the cytoplasm. It catalyses the reaction S-sulfanyl-L-cysteinyl-[protein] + uridine(34) in tRNA + AH2 + ATP = 2-thiouridine(34) in tRNA + L-cysteinyl-[protein] + A + AMP + diphosphate + H(+). Functionally, catalyzes the 2-thiolation of uridine at the wobble position (U34) of tRNA, leading to the formation of s(2)U34. In Nitrosococcus oceani (strain ATCC 19707 / BCRC 17464 / JCM 30415 / NCIMB 11848 / C-107), this protein is tRNA-specific 2-thiouridylase MnmA.